A 1076-amino-acid polypeptide reads, in one-letter code: ESX secretion system protein YueB (1076 aa).

Residues Ile9–Ile29 traverse the membrane as a helical segment. 2 disordered regions span residues Arg372–Asp404 and Ile423–Ile552. The span at Ile423–Thr439 shows a compositional bias: basic and acidic residues. 2 stretches are compositionally biased toward polar residues: residues Asp449 to Thr495 and Ser503 to Asp522. The stretch at Ile552 to Asn622 forms a coiled coil. 5 helical membrane-spanning segments follow: residues Thr904–Phe924, Ala938–Ile958, Asp964–Ile984, Gly995–Met1015, and Thr1040–Ile1060.

It belongs to the EsaA family.

The protein localises to the cell membrane. Its function is as follows. Required for YukE secretion. Probable component or regulator of the ESX/ESAT-6-like secretion system (BsEss). Bacteriophage SPP1 receptor. Essential for the irreversible adsorption of the bacteriophage. The chain is ESX secretion system protein YueB (yueB) from Bacillus subtilis (strain 168).